The chain runs to 383 residues: WD repeat-containing protein 55 (383 aa).

Positions 1-11 (MDRTCEERPAE) are enriched in basic and acidic residues. The interval 1–33 (MDRTCEERPAEDGSDEEDPDSMEAPTRIRDTPE) is disordered. Residues 12 to 21 (DGSDEEDPDS) show a composition bias toward acidic residues. Serine 14 is modified (phosphoserine). WD repeat units follow at residues 36 to 75 (VLEAPASGLAFHPARDLLAAGDVDGDVFVFSYSCQEGETK), 82 to 121 (HHLKACRAVAFSEDGQKLITVSKDKAIHVLDVEQGQLERR), 125 to 163 (AHGAPINSLLLVDENVLATGDDTGGICLWDQRKEGPLMD), 166 to 205 (QHEEYIADMALDPAKKLLLTASGDGCLGIFNIKRRRFELL), 208 to 247 (PQSGDLTSVTLMKWGKKVACGSSEGTIYLFNWNGFGATSD), 250 to 289 (ALRAESIDCMVPVTESLLCTGSTDGVIRAVNILPNRVVGS), and 293 to 332 (HTGEPVEELALSHCGRFLASSGHDQRLKFWDMAQLRAVVV). Phosphoserine is present on serine 354. The segment at 363 to 383 (REEGEDSMAQEEKEETGDDSD) is disordered. Over residues 365 to 383 (EGEDSMAQEEKEETGDDSD) the composition is skewed to acidic residues. Threonine 378 bears the Phosphothreonine mark. A Phosphoserine modification is found at serine 382.

This sequence belongs to the WD repeat WDR55 family.

Its subcellular location is the nucleus. The protein resides in the nucleolus. It is found in the cytoplasm. Its function is as follows. Nucleolar protein that acts as a modulator of rRNA synthesis. Plays a central role during organogenesis. The protein is WD repeat-containing protein 55 (WDR55) of Homo sapiens (Human).